We begin with the raw amino-acid sequence, 541 residues long: Chaperonin GroEL 2 (541 aa).

Residues 30 to 33, K51, 87 to 91, G415, and D496 each bind ATP; these read TLGP and DGTTT.

This sequence belongs to the chaperonin (HSP60) family. In terms of assembly, forms a cylinder of 14 subunits composed of two heptameric rings stacked back-to-back. Interacts with the co-chaperonin GroES.

Its subcellular location is the cytoplasm. The enzyme catalyses ATP + H2O + a folded polypeptide = ADP + phosphate + an unfolded polypeptide.. In terms of biological role, together with its co-chaperonin GroES, plays an essential role in assisting protein folding. The GroEL-GroES system forms a nano-cage that allows encapsulation of the non-native substrate proteins and provides a physical environment optimized to promote and accelerate protein folding. This chain is Chaperonin GroEL 2, found in Bradyrhizobium sp. (strain BTAi1 / ATCC BAA-1182).